The primary structure comprises 186 residues: Peptidyl-tRNA hydrolase (186 aa).

TRNA is bound at residue Tyr-13. His-18 functions as the Proton acceptor in the catalytic mechanism. 3 residues coordinate tRNA: Tyr-59, Asn-61, and Asn-107.

The protein belongs to the PTH family. In terms of assembly, monomer.

The protein resides in the cytoplasm. The catalysed reaction is an N-acyl-L-alpha-aminoacyl-tRNA + H2O = an N-acyl-L-amino acid + a tRNA + H(+). Hydrolyzes ribosome-free peptidyl-tRNAs (with 1 or more amino acids incorporated), which drop off the ribosome during protein synthesis, or as a result of ribosome stalling. In terms of biological role, catalyzes the release of premature peptidyl moieties from peptidyl-tRNA molecules trapped in stalled 50S ribosomal subunits, and thus maintains levels of free tRNAs and 50S ribosomes. The protein is Peptidyl-tRNA hydrolase of Thermotoga petrophila (strain ATCC BAA-488 / DSM 13995 / JCM 10881 / RKU-1).